A 452-amino-acid chain; its full sequence is Phosphoglucosamine mutase (452 aa).

Residue serine 108 is the Phosphoserine intermediate of the active site. Residues serine 108, aspartate 247, aspartate 249, and aspartate 251 each contribute to the Mg(2+) site. Serine 108 is modified (phosphoserine).

The protein belongs to the phosphohexose mutase family. The cofactor is Mg(2+). Activated by phosphorylation.

The enzyme catalyses alpha-D-glucosamine 1-phosphate = D-glucosamine 6-phosphate. In terms of biological role, catalyzes the conversion of glucosamine-6-phosphate to glucosamine-1-phosphate. This Burkholderia thailandensis (strain ATCC 700388 / DSM 13276 / CCUG 48851 / CIP 106301 / E264) protein is Phosphoglucosamine mutase.